The sequence spans 132 residues: Small ribosomal subunit protein uS8 (132 aa).

Belongs to the universal ribosomal protein uS8 family. As to quaternary structure, part of the 30S ribosomal subunit. Contacts proteins S5 and S12.

In terms of biological role, one of the primary rRNA binding proteins, it binds directly to 16S rRNA central domain where it helps coordinate assembly of the platform of the 30S subunit. This is Small ribosomal subunit protein uS8 from Brucella melitensis biotype 1 (strain ATCC 23456 / CCUG 17765 / NCTC 10094 / 16M).